The following is a 368-amino-acid chain: Type 2 DNA topoisomerase 6 subunit A (368 aa).

The Topo IIA-type catalytic domain occupies 9-148; that stretch reads PDTEEAREQL…FHMRPEESGA (140 aa). Y103 acts as the O-(5'-phospho-DNA)-tyrosine intermediate in catalysis. The Mg(2+) site is built by E201 and D253.

It belongs to the TOP6A family. Homodimer. Heterotetramer of two Top6A and two Top6B chains. Requires Mg(2+) as cofactor.

The catalysed reaction is ATP-dependent breakage, passage and rejoining of double-stranded DNA.. In terms of biological role, relaxes both positive and negative superturns and exhibits a strong decatenase activity. The sequence is that of Type 2 DNA topoisomerase 6 subunit A from Haloarcula marismortui (strain ATCC 43049 / DSM 3752 / JCM 8966 / VKM B-1809) (Halobacterium marismortui).